A 466-amino-acid chain; its full sequence is UDP-N-acetylmuramate--L-alanine ligase (466 aa).

114 to 120 (GTHGKTT) lines the ATP pocket.

It belongs to the MurCDEF family.

Its subcellular location is the cytoplasm. It carries out the reaction UDP-N-acetyl-alpha-D-muramate + L-alanine + ATP = UDP-N-acetyl-alpha-D-muramoyl-L-alanine + ADP + phosphate + H(+). It participates in cell wall biogenesis; peptidoglycan biosynthesis. Functionally, cell wall formation. This chain is UDP-N-acetylmuramate--L-alanine ligase, found in Mesorhizobium japonicum (strain LMG 29417 / CECT 9101 / MAFF 303099) (Mesorhizobium loti (strain MAFF 303099)).